The chain runs to 91 residues: Putative membrane protein insertion efficiency factor (91 aa).

The segment at 66-91 (GGVDPVPSCGCHSDKETTPKEKSDNA) is disordered. The segment covering 77–91 (HSDKETTPKEKSDNA) has biased composition (basic and acidic residues).

This sequence belongs to the UPF0161 family.

Its subcellular location is the cell inner membrane. In terms of biological role, could be involved in insertion of integral membrane proteins into the membrane. In Hydrogenovibrio crunogenus (strain DSM 25203 / XCL-2) (Thiomicrospira crunogena), this protein is Putative membrane protein insertion efficiency factor.